We begin with the raw amino-acid sequence, 562 residues long: Phosphoglucomutase-1 (562 aa).

The residue at position 1 (Met-1) is an N-acetylmethionine. An N6-acetyllysine modification is found at Lys-16. Arg-23 contacts alpha-D-glucose 1,6-bisphosphate. Thr-115 is modified (phosphothreonine). Residue Ser-117 participates in alpha-D-glucose 1,6-bisphosphate binding. Ser-117 acts as the Phosphoserine intermediate in catalysis. Ser-117 contacts Mg(2+). Residues Ser-117 and Ser-134 each carry the phosphoserine modification. Position 185 is a phosphothreonine (Thr-185). Phosphoserine is present on Ser-213. The Mg(2+) site is built by Asp-288, Asp-290, and Asp-292. Positions 292 and 293 each coordinate alpha-D-glucose 1,6-bisphosphate. Lys-349 carries the post-translational modification N6-acetyllysine. Residue Tyr-353 is modified to Phosphotyrosine. An alpha-D-glucose 1,6-bisphosphate-binding site is contributed by Thr-357. Residue Ser-369 is modified to Phosphoserine. 3 residues coordinate alpha-D-glucose 1,6-bisphosphate: Glu-376, Ser-378, and Lys-389. Ser-378 is modified (phosphoserine). Lys-419 bears the N6-succinyllysine mark. Phosphothreonine; by PAK1 is present on Thr-467. Ser-477, Ser-485, and Ser-505 each carry phosphoserine. The residue at position 507 (Thr-507) is a Phosphothreonine. Phosphoserine is present on residues Ser-509 and Ser-541.

Belongs to the phosphohexose mutase family. Monomer. The cofactor is Mg(2+). Post-translationally, phosphorylation at Thr-467 by PAK1 significantly enhances enzymatic activity.

The protein localises to the cytoplasm. The catalysed reaction is alpha-D-glucose 1-phosphate = alpha-D-glucose 6-phosphate. The enzyme catalyses O-phospho-L-seryl-[protein] + alpha-D-glucose 1-phosphate = alpha-D-glucose 1,6-bisphosphate + L-seryl-[protein]. It carries out the reaction alpha-D-glucose 1,6-bisphosphate + L-seryl-[protein] = O-phospho-L-seryl-[protein] + alpha-D-glucose 6-phosphate. Its function is as follows. Catalyzes the reversible isomerization of alpha-D-glucose 1-phosphate to alpha-D-glucose 6-phosphate. The mechanism proceeds via the intermediate compound alpha-D-glucose 1,6-bisphosphate. This enzyme participates in both the breakdown and synthesis of glucose. The chain is Phosphoglucomutase-1 (PGM1) from Bos taurus (Bovine).